A 340-amino-acid polypeptide reads, in one-letter code: Protein B17 (340 aa).

The protein belongs to the orthopoxvirus B17 protein family.

This chain is Protein B17, found in Vaccinia virus (strain Copenhagen) (VACV).